Here is a 277-residue protein sequence, read N- to C-terminus: Radial spoke head protein 9 homolog (277 aa).

Belongs to the flagellar radial spoke RSP9 family. Component of axonemal radial spoke complexes.

It localises to the cytoplasm. It is found in the cytoskeleton. Its subcellular location is the cilium axoneme. The protein resides in the flagellum axoneme. The protein localises to the cell projection. It localises to the kinocilium. In terms of biological role, functions as part of axonemal radial spoke complexes that play an important part in the motility of sperm and cilia. Essential for both the radial spoke head assembly and the central pair microtubule stability in ependymal motile cilia. Required for motility of olfactory and neural cilia and for the structural integrity of ciliary axonemes in both 9+0 and 9+2 motile cilia. The sequence is that of Radial spoke head protein 9 homolog (rsph9) from Xenopus tropicalis (Western clawed frog).